Consider the following 205-residue polypeptide: Recombination protein RecR (205 aa).

The C4-type zinc finger occupies 58-75 (CSLCQNVTDKEIDPCNIC). The region spanning 83–182 (RVVCVVEAPN…KVTRIARGIP (100 aa)) is the Toprim domain.

It belongs to the RecR family.

In terms of biological role, may play a role in DNA repair. It seems to be involved in an RecBC-independent recombinational process of DNA repair. It may act with RecF and RecO. This Chloroherpeton thalassium (strain ATCC 35110 / GB-78) protein is Recombination protein RecR.